Here is a 239-residue protein sequence, read N- to C-terminus: MSEVTTNEYNEDGKLIRKIRSFVRREGRLTKGQENAMNECWPTMGIDYKAELLDWKEVFGNDNPVVLEIGFGMGASLVEMAKNAPEKNFFGIEVHSPGVGACLSDAREAGITNLRVMCHDAVEVFEHMIPNDSLATLQLFFPDPWHKKRHHKRRIVQLEFAEMVRQKLIPNEGIFHMATDWENYAEHMIEIMNQAPGFENIAQDGDFVPRPEDRPLTKFEARGHRLGHGVWDIKYKRIA.

Glu68, Glu93, Asp120, and Asp143 together coordinate S-adenosyl-L-methionine. Residue Asp143 is part of the active site. Substrate-binding positions include Lys147, Asp180, and 217–220 (TKFE).

This sequence belongs to the class I-like SAM-binding methyltransferase superfamily. TrmB family.

It carries out the reaction guanosine(46) in tRNA + S-adenosyl-L-methionine = N(7)-methylguanosine(46) in tRNA + S-adenosyl-L-homocysteine. Its pathway is tRNA modification; N(7)-methylguanine-tRNA biosynthesis. Functionally, catalyzes the formation of N(7)-methylguanine at position 46 (m7G46) in tRNA. This Vibrio parahaemolyticus serotype O3:K6 (strain RIMD 2210633) protein is tRNA (guanine-N(7)-)-methyltransferase.